The primary structure comprises 356 residues: Tyrosine recombinase XerS (356 aa).

The Core-binding (CB) domain occupies 16-121 (IMPWYVLEYY…ALSSLFKYLT (106 aa)). The 186-residue stretch at 169 to 354 (EFLEYIDCEY…VNDEQKNALD (186 aa)) folds into the Tyr recombinase domain. Residues arginine 210, lysine 234, histidine 306, arginine 309, and histidine 332 contribute to the active site. Tyrosine 341 acts as the O-(3'-phospho-DNA)-tyrosine intermediate in catalysis.

This sequence belongs to the 'phage' integrase family. XerS subfamily.

The protein resides in the cytoplasm. With respect to regulation, ftsK is required for recombination. Functionally, site-specific tyrosine recombinase, which acts by catalyzing the cutting and rejoining of the recombining DNA molecules. Essential to convert dimers of the bacterial chromosome into monomers to permit their segregation at cell division. This Streptococcus agalactiae serotype Ia (strain ATCC 27591 / A909 / CDC SS700) protein is Tyrosine recombinase XerS.